Consider the following 421-residue polypeptide: Lipid II:glycine glycyltransferase (421 aa).

This sequence belongs to the FemABX family. As to quaternary structure, monomer.

The protein resides in the cytoplasm. It catalyses the reaction beta-D-GlcNAc-(1-&gt;4)-Mur2Ac(oyl-L-Ala-D-isoglutaminyl-L-Lys-D-Ala-D-Ala)-di-trans,octa-cis-undecaprenyl diphosphate + glycyl-tRNA(Gly) = beta-D-GlcNAc-(1-&gt;4)-Mur2Ac(oyl-L-Ala-D-isoglutaminyl-L-Lys-(N(6)-Gly)-D-Ala-D-Ala)-di-trans,octa-cis-undecaprenyl diphosphate + tRNA(Gly) + H(+). Functionally, catalyzes the incorporation of the first glycine of the pentaglycine interpeptide bridge, which is characteristic of the S.aureus peptidoglycan. This glycine is added to the epsilon-amino group of the L-lysine of the membrane-bound lipid II intermediate (GlcNAc-(beta-1,4)-N-acetylmuramic acid(-L-Ala-D-iGln-L-Lys-D-Ala-D-Ala)-pyrophosphoryl-undecaprenol), using glycyl-tRNA(Gly) as donor, in a ribosome-independent mechanism. Involved in methicillin resistance. In Staphylococcus aureus (strain USA300), this protein is Lipid II:glycine glycyltransferase (femX).